We begin with the raw amino-acid sequence, 410 residues long: Peptidase T (410 aa).

Position 79 (H79) interacts with Zn(2+). D81 is an active-site residue. Residue D142 coordinates Zn(2+). E176 (proton acceptor) is an active-site residue. Zn(2+) contacts are provided by E177, D199, and H381.

It belongs to the peptidase M20B family. Requires Zn(2+) as cofactor.

It is found in the cytoplasm. It catalyses the reaction Release of the N-terminal residue from a tripeptide.. Functionally, cleaves the N-terminal amino acid of tripeptides. The sequence is that of Peptidase T from Bacillus velezensis (strain DSM 23117 / BGSC 10A6 / LMG 26770 / FZB42) (Bacillus amyloliquefaciens subsp. plantarum).